The following is a 186-amino-acid chain: Probable nicotinate-nucleotide adenylyltransferase (186 aa).

The protein belongs to the NadD family.

It catalyses the reaction nicotinate beta-D-ribonucleotide + ATP + H(+) = deamido-NAD(+) + diphosphate. It participates in cofactor biosynthesis; NAD(+) biosynthesis; deamido-NAD(+) from nicotinate D-ribonucleotide: step 1/1. Functionally, catalyzes the reversible adenylation of nicotinate mononucleotide (NaMN) to nicotinic acid adenine dinucleotide (NaAD). In Tropheryma whipplei (strain TW08/27) (Whipple's bacillus), this protein is Probable nicotinate-nucleotide adenylyltransferase.